We begin with the raw amino-acid sequence, 540 residues long: GMP synthase [glutamine-hydrolyzing] (540 aa).

A Glutamine amidotransferase type-1 domain is found at 29–222; it reads KILIVDFGSQ…VRKVAGLTGD (194 aa). C106 functions as the Nucleophile in the catalytic mechanism. Residues H196 and E198 contribute to the active site. Residues 223–415 enclose the GMPS ATP-PPase domain; that stretch reads WTMRAFREEA…LGLPEIFVGR (193 aa). 250 to 256 lines the ATP pocket; it reads SGGVDSA.

Homodimer.

The enzyme catalyses XMP + L-glutamine + ATP + H2O = GMP + L-glutamate + AMP + diphosphate + 2 H(+). It functions in the pathway purine metabolism; GMP biosynthesis; GMP from XMP (L-Gln route): step 1/1. Its function is as follows. Catalyzes the synthesis of GMP from XMP. This is GMP synthase [glutamine-hydrolyzing] from Rhodopseudomonas palustris (strain HaA2).